The following is a 361-amino-acid chain: uncharacterized protein (361 aa).

This is an uncharacterized protein from Methanothermobacter thermautotrophicus (Methanobacterium thermoformicicum).